The chain runs to 354 residues: Gibberellin receptor GID1 (354 aa).

An Involved in the stabilization of the negatively charged intermediate by the formation of the oxyanion hole motif is present at residues 120 to 122 (HGG). Residues 122–123 (GS), tyrosine 134, serine 198, and aspartate 250 contribute to the gibberellin A3 site. Gibberellin A4-binding positions include 122 to 123 (GS), tyrosine 134, and serine 198. Serine 198 is a catalytic residue. The active site involves aspartate 296. Residue glycine 327 coordinates gibberellin A3. Glycine 327 provides a ligand contact to gibberellin A4.

This sequence belongs to the 'GDXG' lipolytic enzyme family. In terms of assembly, interacts with the DELLA protein SLR1 in a GA-dependent manner, resulting in subsequent SLR1 degradation.

It is found in the nucleus. Its function is as follows. Functions as a soluble gibberellin (GA) receptor. GA is an essential hormone that regulates growth and development in plants. Binds with high affinity the biologically active GAs such as GA1, GA3 and GA4, but has low or no affinity for the biologically inactive GAs. Upon GA-binding, it interacts with the DELLA protein SLR1, a repressor of GA signaling. This leads to SLR1 degradation by the proteasome, allowing the GA signaling pathway. The sequence is that of Gibberellin receptor GID1 from Oryza sativa subsp. japonica (Rice).